The primary structure comprises 560 residues: NADH-quinone oxidoreductase subunit C/D (560 aa).

Residues 2 to 157 (NKLENLKQLL…NNQQACTNSL (156 aa)) are NADH dehydrogenase I subunit C. Positions 175-560 (KYLPLNIGPS…MNLIAGELDR (386 aa)) are NADH dehydrogenase I subunit D.

The protein in the N-terminal section; belongs to the complex I 30 kDa subunit family. It in the C-terminal section; belongs to the complex I 49 kDa subunit family. NDH-1 is composed of 13 different subunits. Subunits NuoB, CD, E, F, and G constitute the peripheral sector of the complex.

The protein resides in the cytoplasm. Its subcellular location is the cell inner membrane. The enzyme catalyses a quinone + NADH + 5 H(+)(in) = a quinol + NAD(+) + 4 H(+)(out). NDH-1 shuttles electrons from NADH, via FMN and iron-sulfur (Fe-S) centers, to quinones in the respiratory chain. The immediate electron acceptor for the enzyme in this species is believed to be ubiquinone. Couples the redox reaction to proton translocation (for every two electrons transferred, four hydrogen ions are translocated across the cytoplasmic membrane), and thus conserves the redox energy in a proton gradient. In Bdellovibrio bacteriovorus (strain ATCC 15356 / DSM 50701 / NCIMB 9529 / HD100), this protein is NADH-quinone oxidoreductase subunit C/D.